Reading from the N-terminus, the 556-residue chain is Urocanate hydratase (556 aa).

Residues 52–53 (GG), Gln-130, 176–178 (GMG), Glu-196, Arg-201, 243–244 (NA), 264–268 (QTSAH), 274–275 (YL), and Tyr-323 each bind NAD(+). Cys-411 is an active-site residue. NAD(+) is bound at residue Gly-493.

The protein belongs to the urocanase family. Requires NAD(+) as cofactor.

It localises to the cytoplasm. It catalyses the reaction 4-imidazolone-5-propanoate = trans-urocanate + H2O. The protein operates within amino-acid degradation; L-histidine degradation into L-glutamate; N-formimidoyl-L-glutamate from L-histidine: step 2/3. In terms of biological role, catalyzes the conversion of urocanate to 4-imidazolone-5-propionate. The protein is Urocanate hydratase of Rhodospirillum rubrum (strain ATCC 11170 / ATH 1.1.1 / DSM 467 / LMG 4362 / NCIMB 8255 / S1).